The primary structure comprises 260 residues: Shikimate dehydrogenase (NADP(+)) (260 aa).

Shikimate is bound by residues 14–16 and Thr-60; that span reads SAS. Lys-64 acts as the Proton acceptor in catalysis. Residues Asn-85 and Asp-100 each contribute to the shikimate site. NADP(+)-binding positions include 121–125, 145–150, and Phe-201; these read GAGGA and NRTYER. Tyr-203 lines the shikimate pocket. Gly-225 contacts NADP(+).

Belongs to the shikimate dehydrogenase family. Homodimer.

It carries out the reaction shikimate + NADP(+) = 3-dehydroshikimate + NADPH + H(+). It participates in metabolic intermediate biosynthesis; chorismate biosynthesis; chorismate from D-erythrose 4-phosphate and phosphoenolpyruvate: step 4/7. Its function is as follows. Involved in the biosynthesis of the chorismate, which leads to the biosynthesis of aromatic amino acids. Catalyzes the reversible NADPH linked reduction of 3-dehydroshikimate (DHSA) to yield shikimate (SA). This chain is Shikimate dehydrogenase (NADP(+)), found in Pyrobaculum neutrophilum (strain DSM 2338 / JCM 9278 / NBRC 100436 / V24Sta) (Thermoproteus neutrophilus).